The sequence spans 455 residues: MSPVSPRSLTLIGAGLAGCLLAILLSRRGWQVTVYERRGDPRIKGYESGRSINLALAERGRHALRQAGAEDAVMAKAVMMRGRMVHPIIGQPQLQRYGRDDSEVIWSIHRAALNVALLDLAEQAGARVHFYRRLHTVGFDAGYARFIDDRDDQPHEIHFQSLIGSDGAGSALRAAMQRKSPLGERTEFLDHSYKELEIPPQPGGGFRIEGNALHLWPRGRYMCIALPNDGGTFTVTLFLPNAGEPSFATTRTGDEALALFARDFPDALPLIPQLREHWEEHPPGLLGTLTLDRWHLDGRALLIGDAAHAMVPFHGQGMNCAFEDCVALADQLDAHDDLASAFAAFEAARRDDAAAIQQMALENYLEMRDRVDDPDFLLQRELEQKLQARWPTRFVPHYTMVTFLRTRYSIALARSEIQRQILVEATRGHRDLSRIDWAALEAVVHARLEPLDGAH.

This sequence belongs to the aromatic-ring hydroxylase family. KMO subfamily. It depends on FAD as a cofactor.

It carries out the reaction L-kynurenine + NADPH + O2 + H(+) = 3-hydroxy-L-kynurenine + NADP(+) + H2O. The protein operates within cofactor biosynthesis; NAD(+) biosynthesis; quinolinate from L-kynurenine: step 1/3. Catalyzes the hydroxylation of L-kynurenine (L-Kyn) to form 3-hydroxy-L-kynurenine (L-3OHKyn). Required for synthesis of quinolinic acid. This is Kynurenine 3-monooxygenase from Xanthomonas euvesicatoria pv. vesicatoria (strain 85-10) (Xanthomonas campestris pv. vesicatoria).